A 133-amino-acid chain; its full sequence is Small ribosomal subunit protein uS8 (133 aa).

Belongs to the universal ribosomal protein uS8 family. In terms of assembly, part of the 30S ribosomal subunit. Contacts proteins S5 and S12.

One of the primary rRNA binding proteins, it binds directly to 16S rRNA central domain where it helps coordinate assembly of the platform of the 30S subunit. This is Small ribosomal subunit protein uS8 from Leptospira borgpetersenii serovar Hardjo-bovis (strain JB197).